The primary structure comprises 792 residues: RNA-binding protein RRM4 (792 aa).

A disordered region spans residues 37 to 60; sequence TDSTAQASHAAEQTIDAHQQAGDV. RRM domains follow at residues 72–145, 154–235, and 321–398; these read PLLY…QDAS, KPRL…IDTA, and CNLF…LHEP. A compositionally biased stretch (low complexity) spans 412–424; that stretch reads AANADNSDMSSNS. 2 disordered regions span residues 412–438 and 630–649; these read AANADNSDMSSNSPPTEARKADKRQSR and DESGEDLSPPRASSGSAPVP. Over residues 640–649 the composition is skewed to polar residues; sequence RASSGSAPVP. The PABC domain occupies 715 to 792; that stretch reads ATDDFIDSLQ…QHKVAAGLNK (78 aa).

This sequence belongs to the polyadenylate-binding protein type-1 family. In terms of assembly, part of large ribonucleoprotein complexes (mRNPs) containing RNA-binding proteins RRM4 and PAB1, endosome-binding protein UPA1, core scaffold protein UPA2 and associated factor GRP1. Interacts (via PABC domain) with UPA1 (via PAM2 domain).

It is found in the cytoplasm. It localises to the cytoskeleton. The protein localises to the endosome. Functionally, key RNA-binding protein involved in the formation of polar-growing hyphae which is essential for infection by the plant pathogen. During filamentation, assembles into particles that shuttle bidirectionally along microtubules to both poles. The RRM4 transport particles are part of the endosomal mRNP transport that regulates polarity of the infectious hyphae by transporting distinct mRNAs encoding, for example, the ubiquitin fusion protein UBI1, the small G protein RHO3, or the septin CDC3, from the nucleus to cell poles. Recognizes a broad spectrum of cargo mRNAs and precisely binds at stop codons, which constitute landmark sites of translation, suggesting an intimate connection of mRNA transport and translation. Also binds to the specific binding motif UAUG of cargo mRNAs via its third RRM. Plus-end-directed KIN3, a kinesin-3 type motor, mediates anterograde transport of RRM4-containing mRNPs whereas split dynein DYM1-DYN2 functions in retrograde movement of mRNPs. This Mycosarcoma maydis (Corn smut fungus) protein is RNA-binding protein RRM4.